Consider the following 953-residue polypeptide: Nucleotide-binding oligomerization domain-containing protein 1 (953 aa).

A CARD domain is found at 15 to 107 (GCHSHIKLLK…VDLRLWLSEI (93 aa)). Residues 196 to 531 (ETVFVFGDAG…AFFTAFFLVA (336 aa)) enclose the NACHT domain. Residue 202–209 (GDAGVGKS) coordinates ATP. S-palmitoyl cysteine attachment occurs at residues cysteine 558 and cysteine 567. 8 LRR repeats span residues 702 to 725 (FHRQ…ELQP), 727 to 750 (FSRL…VLCE), 755 to 778 (YKIV…YVAQ), 783 to 806 (CRGL…CVAL), 839 to 862 (HPSL…SLAQ), 867 to 890 (NTTL…CFAE), 895 to 918 (NQTL…QLAR), and 923 to 946 (NTAI…VFEN). Residue cysteine 952 is the site of S-palmitoyl cysteine attachment.

The protein belongs to the NOD1-NOD2 family. Homooligomer: homooligomerizes following ligand-binding, promoting RIPK2 recruitment. Interacts (via CARD domain) with RIPK2 (via CARD domain). Following RIPK2 recruitment, RIPK2 homooligomerizes via its CARD domain and forms long filaments named RIPosomes. Interacts (via CARD domain) with ubiquitin; inhibiting interaction with RIPK2. Interacts with ARHGEF2. Interacts with NLRP10 and recruits it to the cell membrane following invasive bacterial infection. Interacts with IFIH1; this interaction promotes transcription of antiviral genes and inhibition of viral replication. Interacts with Irgm1; promoting NOD1 degradation. Interacts with ATG16L1. In terms of processing, ubiquitinated. 'Lys-48'-linked polyubiquitination by RNF34 promotes proteasomal degradation and thereby negatively regulates NOD1 for instance in NF-kappa-B activation. Palmitoylated. Palmitoylation is required for proper recruitment to the bacterial entry site and hence for proper signaling upon cognate peptidoglycan detection. Post-translationally, degraded via selective autophagy following interaction with Irgm1. Irgm1 promotes NOD1-RIPK2 RIPosome recruitment to autophagosome membranes, promoting their SQSTM1/p62-dependent autophagic degradation. As to expression, although ubiquitously expressed, NOD1 levels are more abundant in immune cells, the gastrointestinal tract, and adipose tissue.

It localises to the cell membrane. The protein resides in the apical cell membrane. The protein localises to the basolateral cell membrane. It is found in the cytoplasm. In terms of biological role, pattern recognition receptor (PRR) that detects bacterial peptidoglycan fragments and other danger signals and thus participates in both innate and adaptive immune responses. Specifically recognizes and binds gamma-D-glutamyl-meso-diaminopimelic acid (iE-DAP), a dipeptide present in peptidoglycan of Gram-negative bacteria. Preferentially binds iE-DAP in tetrapeptide-containing muropeptides (MurNAc-TetraDAP or TetraDAP). Ligand binding triggers oligomerization that facilitates the binding and subsequent activation of the proximal adapter receptor-interacting RIPK2. Following recruitment, RIPK2 undergoes 'Met-1'- (linear) and 'Lys-63'-linked polyubiquitination by E3 ubiquitin-protein ligases XIAP, BIRC2, BIRC3 and the LUBAC complex, becoming a scaffolding protein for downstream effectors, triggering activation of the NF-kappa-B and MAP kinases signaling. This in turn leads to the transcriptional activation of hundreds of genes involved in immune response. Also acts as a regulator of antiviral response elicited by dsRNA and the expression of RLR pathway members by targeting IFIH1 and TRAF3 to modulate the formation of IFIH1-MAVS and TRAF3-MAVS complexes leading to increased transcription of type I IFNs. Also acts as a regulator of autophagy via its interaction with ATG16L1, possibly by recruiting ATG16L1 at the site of bacterial entry. Besides recognizing pathogens, also involved in the endoplasmic reticulum stress response: acts by sensing and binding to the cytosolic metabolite sphingosine-1-phosphate generated in response to endoplasmic reticulum stress, initiating an inflammation process that leads to activation of the NF-kappa-B and MAP kinases signaling. In addition, plays a role in insulin trafficking in beta cells in a cell-autonomous manner. Mechanistically, upon recognizing cognate ligands, NOD1 and RIPK2 localize to insulin vesicles where they recruit RAB1A to direct insulin trafficking through the cytoplasm. This is Nucleotide-binding oligomerization domain-containing protein 1 from Mus musculus (Mouse).